Consider the following 136-residue polypeptide: MLQPKRTKFRKMHKGRNRGLASGTDINFGTFGLQAIDRGRLTARQIESARRAITRCIKRQGKMWIRIFPDKPITQKPLEVRMGKGKGNVEYWVALVQPGKILYELEGVTEEESRAAFKLAAAKLPIKTTFVNKMVM.

Belongs to the universal ribosomal protein uL16 family. Part of the 50S ribosomal subunit.

Its function is as follows. Binds 23S rRNA and is also seen to make contacts with the A and possibly P site tRNAs. The protein is Large ribosomal subunit protein uL16 of Buchnera aphidicola subsp. Acyrthosiphon pisum (strain 5A).